Consider the following 126-residue polypeptide: Ribosome-binding factor A (126 aa).

It belongs to the RbfA family. In terms of assembly, monomer. Binds 30S ribosomal subunits, but not 50S ribosomal subunits or 70S ribosomes.

The protein localises to the cytoplasm. Its function is as follows. One of several proteins that assist in the late maturation steps of the functional core of the 30S ribosomal subunit. Associates with free 30S ribosomal subunits (but not with 30S subunits that are part of 70S ribosomes or polysomes). Required for efficient processing of 16S rRNA. May interact with the 5'-terminal helix region of 16S rRNA. The sequence is that of Ribosome-binding factor A from Histophilus somni (strain 129Pt) (Haemophilus somnus).